Here is a 642-residue protein sequence, read N- to C-terminus: MDKLKCPSFFKCREKEKVSASSENFHVGENDENQDRGNWSKKSDYLLSMIGYAVGLGNVWRFPYLTYSNGGGAFLIPYAIMLALAGLPLFFLECSLGQFASLGPVSVWRILPLFQGVGITMVLISIFVTIYYNVIIAYSLYYMFASFQSELPWKNCSSWSDKNCSRSPIVTHCNVSTVNKGIQEIIQMNKSWVDINNFTCINGSEIYQPGQLPSEQYWNKVALQRSSGMNETGVIVWYLALCLLLAWLIVGAALFKGIKSSGKVVYFTALFPYVVLLILLVRGATLEGASKGISYYIGAQSNFTKLKEAEVWKDAATQIFYSLSVAWGGLVALSSYNKFKNNCFSDAIVVCLTNCLTSVFAGFAIFSILGHMAHISGKEVSQVVKSGFDLAFIAYPEALAQLPGGPFWSILFFFMLLTLGLDSQFASIETITTTIQDLFPKVMKKMRVPITLGCCLVLFLLGLVCVTQAGIYWVHLIDHFCAGWGILIAAILELVGIIWIYGGNRFIEDTEMMIGAKRWIFWLWWRACWFVITPILLIAIFIWSLVQFHRPNYGAIPYPDWGVALGWCMIVFCIIWIPIMAIIKIIQAKGNIFQRLISCCRPASNWGPYLEQHRGERYKDMVDPKKEADHEIPTVSGSRKPE.

Residues 1 to 44 (MDKLKCPSFFKCREKEKVSASSENFHVGENDENQDRGNWSKKSD) are Cytoplasmic-facing. Helical transmembrane passes span 45–65 (YLLS…FPYL), 72–92 (GAFL…LFFL), and 110–130 (ILPL…FVTI). Topologically, residues 131-234 (YYNVIIAYSL…RSSGMNETGV (104 aa)) are extracellular. 7 N-linked (GlcNAc...) asparagine glycosylation sites follow: Asn-155, Asn-163, Asn-174, Asn-189, Asn-197, Asn-202, and Asn-230. The next 2 membrane-spanning stretches (helical) occupy residues 235–255 (IVWY…AALF) and 261–281 (SGKV…ILLV). Asn-302 is a glycosylation site (N-linked (GlcNAc...) asparagine). Helical transmembrane passes span 315 to 335 (AATQ…ALSS), 348 to 368 (IVVC…IFSI), 399 to 419 (LAQL…LLTL), 450 to 477 (ITLG…VHLI), 480 to 500 (FCAG…IIWI), 528 to 548 (CWFV…LVQF), and 563 to 583 (VALG…MAII). Residues 584 to 642 (KIIQAKGNIFQRLISCCRPASNWGPYLEQHRGERYKDMVDPKKEADHEIPTVSGSRKPE) lie on the Cytoplasmic side of the membrane. The segment covering 622–632 (VDPKKEADHEI) has biased composition (basic and acidic residues). Positions 622–642 (VDPKKEADHEIPTVSGSRKPE) are disordered.

The protein belongs to the sodium:neurotransmitter symporter (SNF) (TC 2.A.22) family. SLC6A14 subfamily. As to expression, levels are highest in adult and fetal lung, in trachea and salivary gland. Lower levels detected in mammary gland, stomach and pituitary gland, and very low levels in colon, uterus, prostate and testis.

It is found in the membrane. It localises to the apical cell membrane. The catalysed reaction is glycine(out) + chloride(out) + 2 Na(+)(out) = glycine(in) + chloride(in) + 2 Na(+)(in). It carries out the reaction L-leucine(out) + chloride(out) + 2 Na(+)(out) = L-leucine(in) + chloride(in) + 2 Na(+)(in). The enzyme catalyses L-glutamine(out) + chloride(out) + 2 Na(+)(out) = L-glutamine(in) + chloride(in) + 2 Na(+)(in). It catalyses the reaction L-arginine(out) + chloride(out) + 2 Na(+)(out) = L-arginine(in) + chloride(in) + 2 Na(+)(in). The catalysed reaction is (R)-carnitine(out) + chloride(out) + 2 Na(+)(out) = (R)-carnitine(in) + chloride(in) + 2 Na(+)(in). It carries out the reaction O-butanoyl-(R)-carnitine(out) + chloride(out) + 2 Na(+)(out) = O-butanoyl-(R)-carnitine(in) + chloride(in) + 2 Na(+)(in). The enzyme catalyses O-propanoyl-(R)-carnitine(out) + chloride(out) + 2 Na(+)(out) = O-propanoyl-(R)-carnitine(in) + chloride(in) + 2 Na(+)(in). It catalyses the reaction L-isoleucine(out) + chloride(out) + 2 Na(+)(out) = L-isoleucine(in) + chloride(in) + 2 Na(+)(in). The catalysed reaction is L-methionine(out) + chloride(out) + 2 Na(+)(out) = L-methionine(in) + chloride(in) + 2 Na(+)(in). It carries out the reaction L-valine(out) + chloride(out) + 2 Na(+)(out) = L-valine(in) + chloride(in) + 2 Na(+)(in). The enzyme catalyses L-alanine(out) + chloride(out) + 2 Na(+)(out) = L-alanine(in) + chloride(in) + 2 Na(+)(in). It catalyses the reaction L-serine(out) + chloride(out) + 2 Na(+)(out) = L-serine(in) + chloride(in) + 2 Na(+)(in). The catalysed reaction is L-cysteine(out) + chloride(out) + 2 Na(+)(out) = L-cysteine(in) + chloride(in) + 2 Na(+)(in). It carries out the reaction L-asparagine(out) + chloride(out) + 2 Na(+)(out) = L-asparagine(in) + chloride(in) + 2 Na(+)(in). The enzyme catalyses L-threonine(out) + chloride(out) + 2 Na(+)(out) = L-threonine(in) + chloride(in) + 2 Na(+)(in). It catalyses the reaction L-phenylalanine(out) + chloride(out) + 2 Na(+)(out) = L-phenylalanine(in) + chloride(in) + 2 Na(+)(in). The catalysed reaction is L-tryptophan(out) + chloride(out) + 2 Na(+)(out) = L-tryptophan(in) + chloride(in) + 2 Na(+)(in). It carries out the reaction L-tyrosine(out) + chloride(out) + 2 Na(+)(out) = L-tyrosine(in) + chloride(in) + 2 Na(+)(in). The enzyme catalyses L-histidine(out) + chloride(out) + 2 Na(+)(out) = L-histidine(in) + chloride(in) + 2 Na(+)(in). It catalyses the reaction L-lysine(out) + chloride(out) + 2 Na(+)(out) = L-lysine(in) + chloride(in) + 2 Na(+)(in). The catalysed reaction is beta-alanine(out) + chloride(out) + 2 Na(+)(out) = beta-alanine(in) + chloride(in) + 2 Na(+)(in). Functionally, amino acid transporter that plays an important role in the absorption of amino acids in the intestinal tract. Mediates the uptake of a broad range of neutral and cationic amino acids (with the exception of proline) in a Na(+)/Cl(-)-dependent manner. Transports non-alpha-amino acids such as beta-alanine with low affinity, and has a higher affinity for dipolar and cationic amino acids such as leucine and lysine. Can also transport carnitine, butirylcarnitine and propionylcarnitine coupled to the transmembrane gradients of Na(+) and Cl(-). The chain is Sodium- and chloride-dependent neutral and basic amino acid transporter B(0+) from Homo sapiens (Human).